Consider the following 307-residue polypeptide: Transcription factor DIVARICATA (307 aa).

Residues 21–74 enclose the SANT domain; that stretch reads RSTTRWTAAENKAFENALAVFDENTPNRWERVAERVPGKTVGDVMRQYKELEDD. A disordered region spans residues 109–133; it reads QSYGTGGRKSSSGRPSEQERKKGVP. Residues 124–133 are compositionally biased toward basic and acidic residues; that stretch reads SEQERKKGVP. One can recognise an HTH myb-type domain in the interval 126 to 182; it reads QERKKGVPWTEEEHKLFLMGLKKYGKGDWRNISRNFVITRTPTQVASHAQKYFIRQL. A DNA-binding region (H-T-H motif) is located at residues 154–178; that stretch reads WRNISRNFVITRTPTQVASHAQKYF. 2 stretches are compositionally biased toward polar residues: residues 196–206 and 222–231; these read ITTVNLSDNQT and MAQQQTSSTS. The segment at 196–231 is disordered; the sequence is ITTVNLSDNQTPSPDNKKPPSSPDHSMAQQQTSSTS.

The protein localises to the nucleus. Its function is as follows. Involved in the dorsovental asymmetry of flowers. Promotes ventral identity. The polypeptide is Transcription factor DIVARICATA (DIVARICATA) (Antirrhinum majus (Garden snapdragon)).